Consider the following 239-residue polypeptide: Large ribosomal subunit protein uL1 (239 aa).

Belongs to the universal ribosomal protein uL1 family. In terms of assembly, part of the 50S ribosomal subunit.

Functionally, binds directly to 23S rRNA. The L1 stalk is quite mobile in the ribosome, and is involved in E site tRNA release. Protein L1 is also a translational repressor protein, it controls the translation of the L11 operon by binding to its mRNA. This chain is Large ribosomal subunit protein uL1, found in Mycolicibacterium gilvum (strain PYR-GCK) (Mycobacterium gilvum (strain PYR-GCK)).